Reading from the N-terminus, the 250-residue chain is MTDDVSRETPSVPDVARRVFASDRLSLAERFVELLAGDGVVRGLIGPRETPRLWDRHLLNCALLAQQVPLEATVADLGSGAGLPGVVLAIARPDLRVTLVEPLLRRTTFLEEVVAELGLDRVEVLRARAEALHGDRRFAVVTSRALAPLDRLLGWSMPLVEPTGALLAMKGSAVAEEITAAGPELARWGCATPEVLSLGADLGLAPTVAVRVVWADPGRVSWPIAAPRKRGGQQRRAGHARGTSNRRRGT.

S-adenosyl-L-methionine contacts are provided by residues Gly-78, Leu-83, 129–130, and Arg-144; that span reads AE. The disordered stretch occupies residues 224–250; that stretch reads IAAPRKRGGQQRRAGHARGTSNRRRGT. The segment covering 227–250 has biased composition (basic residues); it reads PRKRGGQQRRAGHARGTSNRRRGT.

This sequence belongs to the methyltransferase superfamily. RNA methyltransferase RsmG family.

The protein resides in the cytoplasm. Functionally, specifically methylates the N7 position of guanine in position 518 of 16S rRNA. This is Ribosomal RNA small subunit methyltransferase G from Nocardioides sp. (strain ATCC BAA-499 / JS614).